We begin with the raw amino-acid sequence, 104 residues long: Large ribosomal subunit protein bL21 (104 aa).

The protein belongs to the bacterial ribosomal protein bL21 family. As to quaternary structure, part of the 50S ribosomal subunit. Contacts protein L20.

In terms of biological role, this protein binds to 23S rRNA in the presence of protein L20. This is Large ribosomal subunit protein bL21 from Francisella tularensis subsp. holarctica (strain FTNF002-00 / FTA).